Consider the following 171-residue polypeptide: Co-chaperone protein HscB (171 aa).

One can recognise a J domain in the interval 2–74 (DYFTLFGLPA…LMRAEYLLSL (73 aa)).

It belongs to the HscB family. Interacts with HscA and stimulates its ATPase activity. Interacts with IscU.

In terms of biological role, co-chaperone involved in the maturation of iron-sulfur cluster-containing proteins. Seems to help targeting proteins to be folded toward HscA. This Shigella flexneri serotype 5b (strain 8401) protein is Co-chaperone protein HscB.